The primary structure comprises 837 residues: MSAGRLWSSLLLLLPLFCSKSSSCGLSTHVEIGHRALEFLRLQDGRINYKELILEHQDAYQAGTVFPDAFYPSICKRGKYHDVSERTHWTPFLNASIHYIRENYPLPWEKDTEKLVAFLFGITSHMVADLSWHNLGFLRTMGAIDFYNSYSDAHSAGDFGGDVLSQFEFNFNYLSRRWYVPVRDLLRIYDNLYGRKVITKDVLVDCTYLQFLEMHGEMFAVSKLYSTYSTKSPFLVEQFQDYFLGGLDDMAFWSTNIYRLTSFMLENGTSDCNLPENPLFISCDGRNHTLSGSKVQKNDFHRNLTMFISRDIRKNLNYTERGVFYSTGSWARPESVTFMYQTLERNLRLMLAGSSQKNLNHVSSPSASYTLSVPYARLGWVMTSADLNQDGHGDLVVGAPGYSHPGRFQIGRVYIIYGNDLGLPPIDLDLNKEGILEGFQPSGRFGSALAVLDFNQDGLPDLAVGAPSVGSGQLTYNGSVYVYYGSQQGRLSSSPNVTISCKDTYCNLGWTLLATDADGDGRHDLVISSPFAPGGRKQKGIVATFYSHPRRNDKELLTLEEADWKVNGEEDFSWFGYSLHGVTVANRSLLLIGSPTWKNVSRMARSSHKKNQEEKSLGKVYGYFLPNRQSTITISGDKAMGKLGTSLSSGYVRVNGTLTQVLLVGAPTHDDVSKMAFLTMTLHQGGATRMYELAPEKTQPALLSTFSGDRRFSRFGSVLHLTDLDDDGLDEIIMAAPLRITDVTSGLLGGEDGRVYIYNGMYTTLGDMTGKCKSWMTPCPEEKAQYVLTSPEASSRFGSSLVSVRSKGRNQVVVAAGRSSWGARLSGALHVYSFSSD.

The first 23 residues, 1 to 23 (MSAGRLWSSLLLLLPLFCSKSSS), serve as a signal peptide directing secretion. N94, N267, N287, N303, and N317 each carry an N-linked (GlcNAc...) asparagine glycan. 7 FG-GAP repeats span residues 364-425 (SPSA…GLPP), 431-492 (NKEG…GRLS), 494-554 (SPNV…RNDK), 561-619 (EADW…SLGK), 629-689 (QSTI…GATR), 701-767 (ALLS…TLGD), and 785-837 (QYVL…FSSD). N-linked (GlcNAc...) asparagine glycosylation is found at N477, N496, N586, N599, and N655.

Belongs to the GPLD1 family. As to quaternary structure, monomer. In terms of tissue distribution, widely expressed.

It is found in the secreted. The enzyme catalyses a 6-(alpha-D-glucosaminyl)-1-(1,2-diacyl-sn-glycero-3-phospho)-1D-myo-inositol + H2O = 6-(alpha-D-glucosaminyl)-1D-myo-inositol + a 1,2-diacyl-sn-glycero-3-phosphate + H(+). In terms of biological role, this protein hydrolyzes the inositol phosphate linkage in proteins anchored by phosphatidylinositol glycans (GPI-anchor) thus releasing these proteins from the membrane. In Mus musculus (Mouse), this protein is Phosphatidylinositol-glycan-specific phospholipase D (Gpld1).